A 166-amino-acid polypeptide reads, in one-letter code: Ribosome maturation factor RimM (166 aa).

The 72-residue stretch at Glu-94–Leu-165 folds into the PRC barrel domain.

It belongs to the RimM family. As to quaternary structure, binds ribosomal protein uS19.

The protein resides in the cytoplasm. An accessory protein needed during the final step in the assembly of 30S ribosomal subunit, possibly for assembly of the head region. Essential for efficient processing of 16S rRNA. May be needed both before and after RbfA during the maturation of 16S rRNA. It has affinity for free ribosomal 30S subunits but not for 70S ribosomes. The polypeptide is Ribosome maturation factor RimM (Borreliella afzelii (strain PKo) (Borrelia afzelii)).